We begin with the raw amino-acid sequence, 299 residues long: Taste receptor type 2 member 50 (299 aa).

Residue M1 is a topological domain, extracellular. A helical membrane pass occupies residues 2–22 (ITFLYIFFSILIMVLFVLGNF). Residues 23–55 (ANGFIALVNFIDWVKRKKISSADQILTALAVSR) lie on the Cytoplasmic side of the membrane. A helical membrane pass occupies residues 56–76 (IGLLWALLLNWYLTVLNPAFY). Residues 77-87 (SVELRITSYNA) lie on the Extracellular side of the membrane. A helical transmembrane segment spans residues 88–108 (WVVTNHFSMWLAANLSIFYLL). Residues 109-126 (KIANFSNLLFLHLKRRVR) are Cytoplasmic-facing. A helical membrane pass occupies residues 127 to 147 (SVILVILLGTLIFLVCHLLVA). The Extracellular segment spans residues 148-181 (NMDESMWAEEYEGNMTGKMKLRNTVHLSYLTVTT). N161 is a glycosylation site (N-linked (GlcNAc...) asparagine). A helical transmembrane segment spans residues 182 to 202 (LWSFIPFTLSLISFLMLICSL). At 203 to 229 (CKHLKKMQLHGEGSQDLSTKVHIKALQ) the chain is on the cytoplasmic side. The chain crosses the membrane as a helical span at residues 230–250 (TLISFLLLCAIFFLFLIVSVW). Topologically, residues 251-259 (SPRRLRNDP) are extracellular. The chain crosses the membrane as a helical span at residues 260 to 280 (VVMVSKAVGNIYLAFDSFILI). Topologically, residues 281 to 299 (WRTKKLKHTFLLILCQIRC) are cytoplasmic.

Belongs to the G-protein coupled receptor T2R family. As to expression, expressed in subsets of taste receptor cells of the tongue and exclusively in gustducin-positive cells.

Its subcellular location is the membrane. Functionally, receptor that may play a role in the perception of bitterness and is gustducin-linked. May play a role in sensing the chemical composition of the gastrointestinal content. The activity of this receptor may stimulate alpha gustducin, mediate PLC-beta-2 activation and lead to the gating of TRPM5. This Homo sapiens (Human) protein is Taste receptor type 2 member 50 (TAS2R50).